A 496-amino-acid chain; its full sequence is Probable cytosol aminopeptidase (496 aa).

Mn(2+) is bound by residues Lys266 and Asp271. Lys278 is an active-site residue. Residues Asp289, Asp348, and Glu350 each coordinate Mn(2+). Arg352 is a catalytic residue.

This sequence belongs to the peptidase M17 family. The cofactor is Mn(2+).

It localises to the cytoplasm. It carries out the reaction Release of an N-terminal amino acid, Xaa-|-Yaa-, in which Xaa is preferably Leu, but may be other amino acids including Pro although not Arg or Lys, and Yaa may be Pro. Amino acid amides and methyl esters are also readily hydrolyzed, but rates on arylamides are exceedingly low.. It catalyses the reaction Release of an N-terminal amino acid, preferentially leucine, but not glutamic or aspartic acids.. Presumably involved in the processing and regular turnover of intracellular proteins. Catalyzes the removal of unsubstituted N-terminal amino acids from various peptides. The sequence is that of Probable cytosol aminopeptidase from Pseudomonas syringae pv. tomato (strain ATCC BAA-871 / DC3000).